Reading from the N-terminus, the 242-residue chain is MRFDVVTLFPAIFDGYLTQSLLDKAIVRGLVEIQRHNLRDWAEDTPHRKVDDRPFGGGPGMLLQVEPTVTCVRDVDAMADVPARKILLTPQGRRLDQRLAEDLATSDRIMLMCGRYEGFDQRVLDILQPEEISIGDFVLNGGEVAAMTIIDAVVRLLPGVLGDEQSSLDDSFSRGNRMLEFPQYTRPREFEGHTVPDVLLSGDHAAIAAWRAEQSRARTIDRRRDLLPEHSKNNPEQTNKLS.

S-adenosyl-L-methionine is bound by residues Gly-114 and 134–139 (IGDFVL). A compositionally biased stretch (basic and acidic residues) spans 223-233 (RRDLLPEHSKN). The tract at residues 223 to 242 (RRDLLPEHSKNNPEQTNKLS) is disordered.

This sequence belongs to the RNA methyltransferase TrmD family. Homodimer.

It is found in the cytoplasm. The catalysed reaction is guanosine(37) in tRNA + S-adenosyl-L-methionine = N(1)-methylguanosine(37) in tRNA + S-adenosyl-L-homocysteine + H(+). In terms of biological role, specifically methylates guanosine-37 in various tRNAs. In Rhodopirellula baltica (strain DSM 10527 / NCIMB 13988 / SH1), this protein is tRNA (guanine-N(1)-)-methyltransferase.